Reading from the N-terminus, the 134-residue chain is uncharacterized protein (134 aa).

In terms of domain architecture, HIT spans 4–107; that stretch reads IFTKIINREL…PTHSLSNFSF (104 aa). The Histidine triad motif motif lies at 91–95; that stretch reads HLHIH.

This is an uncharacterized protein from Mycobacterium leprae (strain TN).